Reading from the N-terminus, the 317-residue chain is Ret finger protein-like 1 (317 aa).

An RING-type zinc finger spans residues 40 to 82; it reads CPVCSDYLEKPMSLECGCAVCFKCINSLQKEPHGEDLLCCCCS. The B30.2/SPRY domain maps to 107–301; sequence EPKLKKILQM…DKSVLSICPV (195 aa).

Phosphorylated by PKC and CDK1. The antiproliferative effect seems to be positively regulated by PKC phosphorylation and negatively by CDK1 phosphorylation. Seems to be expressed in prostate and less abundantly in adult brain, fetal liver, and fetal kidney.

The protein resides in the cytoplasm. Its subcellular location is the nucleus. In terms of biological role, negatively regulates the G2-M phase transition, possibly by promoting cyclin B1/CCNB1 and CDK1 proteasomal degradation and thereby preventing their accumulation during interphase. The polypeptide is Ret finger protein-like 1 (RFPL1) (Homo sapiens (Human)).